We begin with the raw amino-acid sequence, 179 residues long: Peptidyl-prolyl cis-trans isomerase H (179 aa).

Residues 16-178 (FFDISIGDTP…LQVRIAECGE (163 aa)) form the PPIase cyclophilin-type domain.

It belongs to the cyclophilin-type PPIase family. PPIase H subfamily.

The protein resides in the nucleus. It carries out the reaction [protein]-peptidylproline (omega=180) = [protein]-peptidylproline (omega=0). Its function is as follows. PPIases accelerate the folding of proteins. It catalyzes the cis-trans isomerization of proline imidic peptide bonds in oligopeptides. In Cryptococcus neoformans var. neoformans serotype D (strain B-3501A) (Filobasidiella neoformans), this protein is Peptidyl-prolyl cis-trans isomerase H (CYP3).